Here is a 233-residue protein sequence, read N- to C-terminus: Orotidine 5'-phosphate decarboxylase (233 aa).

Residues Asp9, Lys31, Asp58–Thr67, Thr120, Arg182, Gln191, Gly211, and Arg212 contribute to the substrate site. Residue Lys60 is the Proton donor of the active site.

It belongs to the OMP decarboxylase family. Type 1 subfamily. As to quaternary structure, homodimer.

The catalysed reaction is orotidine 5'-phosphate + H(+) = UMP + CO2. It functions in the pathway pyrimidine metabolism; UMP biosynthesis via de novo pathway; UMP from orotate: step 2/2. Functionally, catalyzes the decarboxylation of orotidine 5'-monophosphate (OMP) to uridine 5'-monophosphate (UMP). This is Orotidine 5'-phosphate decarboxylase from Listeria monocytogenes serotype 4a (strain HCC23).